A 274-amino-acid polypeptide reads, in one-letter code: Bis(5'-nucleosyl)-tetraphosphatase, symmetrical (274 aa).

The protein belongs to the Ap4A hydrolase family.

The enzyme catalyses P(1),P(4)-bis(5'-adenosyl) tetraphosphate + H2O = 2 ADP + 2 H(+). Its function is as follows. Hydrolyzes diadenosine 5',5'''-P1,P4-tetraphosphate to yield ADP. The polypeptide is Bis(5'-nucleosyl)-tetraphosphatase, symmetrical (apaH) (Buchnera aphidicola subsp. Acyrthosiphon pisum (strain APS) (Acyrthosiphon pisum symbiotic bacterium)).